Consider the following 590-residue polypeptide: Probable lysosomal cobalamin transporter (590 aa).

10 consecutive transmembrane segments (helical) span residues 8-28 (LIWVVYAIVFFLLVAVSSIFI), 46-66 (IFTLTALLATVLLLPVDVALV), 94-114 (AVAYYFLYSLDAVLCLLVVPF), 145-165 (TVAFILLTVILFLVGFFVPIG), 190-210 (ALTFALGLLITIGILVYVLYT), 314-334 (LLSGLLLLAIAMLVWVSMLLT), 348-367 (CGYILGKTNILNPINWVFVH), 376-396 (YILFVFLVLVFFCSSVVGIAT), 421-441 (ITTVMLTLITLALNYSISMVV), and 508-528 (FFGIVDFWAQFFFLGLSLLVF). The segment at 567–590 (WEDITGRASRSPQVSGSAGRGTRE) is disordered.

The protein belongs to the LIMR family. LMBRD1 subfamily.

It is found in the lysosome membrane. Probable lysosomal cobalamin transporter. Required to export cobalamin from lysosomes allowing its conversion to cofactors. The chain is Probable lysosomal cobalamin transporter from Ajellomyces capsulatus (strain NAm1 / WU24) (Darling's disease fungus).